The following is a 414-amino-acid chain: WW domain-containing oxidoreductase (414 aa).

Positions 1–24 (MAALRYAGLDDTDSEDELPPGWEE) are disordered. T12 carries the post-translational modification Phosphothreonine. At S14 the chain carries Phosphoserine. Residues 16 to 49 (DELPPGWEERTTKDGWVYYANHTEEKTQWEHPKT) form the WW 1 domain. A Phosphotyrosine modification is found at Y33. The short motif at 50 to 55 (GKRKRV) is the Nuclear localization signal element. The WW 2 domain occupies 57-90 (GDLPYGWEQGTDENGQVFFVDHINKRTTYLDPRL). Residues 125 to 414 (KVVVVTGANS…IQERLGSQSG (290 aa)) form an interaction with MAPT region. 131-137 (GANSGIG) is an NADP(+) binding site. The tract at residues 209-273 (CNAATFALPW…RFTDINDSLG (65 aa)) is mediates targeting to the mitochondria. S260 is a substrate binding site. The residue at position 287 (Y287) is a Phosphotyrosine; by TNK2. Y293 acts as the Proton acceptor in catalysis.

This sequence belongs to the short-chain dehydrogenases/reductases (SDR) family. Interacts with TP53, p73/TP73 and MAPK8. Interacts with MAPT/TAU, RUNX2 and HYAL2. Forms a ternary complex with TP53 and MDM2. Interacts with ERBB4, LITAF and WBP1. Interacts with DVL1, DVL2 and DVL3. May interact with FAM189B and SCOTIN. Interacts with TNK2. Interacts with TMEM207. Interacts (via WW domain) with VOPP1. Post-translationally, phosphorylated upon genotoxic stress. Phosphorylation of Tyr-33 regulates interaction with TP53, TP73 and MAPK8. May also regulate proapoptotic activity. Phosphorylation by TNK2 is associated with polyubiquitination and degradation. Ubiquitinated when phosphorylated by TNK2, leading to its degradation.

It is found in the cytoplasm. The protein localises to the nucleus. The protein resides in the mitochondrion. It localises to the golgi apparatus. Its subcellular location is the lysosome. Putative oxidoreductase. Acts as a tumor suppressor and plays a role in apoptosis. May function synergistically with p53/TP53 to control genotoxic stress-induced cell death. Plays a role in TGFB1 signaling and TGFB1-mediated cell death. May also play a role in tumor necrosis factor (TNF)-mediated cell death. Required for normal bone development. Inhibits Wnt signaling, probably by sequestering DVL2 in the cytoplasm. This chain is WW domain-containing oxidoreductase (WWOX), found in Pongo abelii (Sumatran orangutan).